The following is a 141-amino-acid chain: Lutropin subunit beta (141 aa).

Positions 1–21 are cleaved as a signal peptide; sequence MERYQELTVLLLLLLLEGGSG. 6 disulfide bridges follow: cysteine 30-cysteine 78, cysteine 44-cysteine 93, cysteine 47-cysteine 131, cysteine 55-cysteine 109, cysteine 59-cysteine 111, and cysteine 114-cysteine 121. Asparagine 34 carries N-linked (GlcNAc...) asparagine glycosylation.

It belongs to the glycoprotein hormones subunit beta family. Heterodimer of a common alpha chain and a unique beta chain which confers biological specificity to thyrotropin, lutropin, follitropin and gonadotropin.

The protein resides in the secreted. In terms of biological role, promotes spermatogenesis and ovulation by stimulating the testes and ovaries to synthesize steroids. This chain is Lutropin subunit beta (LHB), found in Monodelphis domestica (Gray short-tailed opossum).